The following is a 305-amino-acid chain: Probable 4-deoxy-4-formamido-L-arabinose-phosphoundecaprenol deformylase ArnD (305 aa).

In terms of domain architecture, NodB homology spans 7-262 (TKVGLRIDVD…QAKENNIEFV (256 aa)).

The protein belongs to the polysaccharide deacetylase family. ArnD deformylase subfamily.

The enzyme catalyses 4-deoxy-4-formamido-alpha-L-arabinopyranosyl di-trans,octa-cis-undecaprenyl phosphate + H2O = 4-amino-4-deoxy-alpha-L-arabinopyranosyl di-trans,octa-cis-undecaprenyl phosphate + formate. Its pathway is glycolipid biosynthesis; 4-amino-4-deoxy-alpha-L-arabinose undecaprenyl phosphate biosynthesis; 4-amino-4-deoxy-alpha-L-arabinose undecaprenyl phosphate from UDP-4-deoxy-4-formamido-beta-L-arabinose and undecaprenyl phosphate: step 2/2. It functions in the pathway bacterial outer membrane biogenesis; lipopolysaccharide biosynthesis. Functionally, catalyzes the deformylation of 4-deoxy-4-formamido-L-arabinose-phosphoundecaprenol to 4-amino-4-deoxy-L-arabinose-phosphoundecaprenol. The modified arabinose is attached to lipid A and is required for resistance to polymyxin and cationic antimicrobial peptides. The protein is Probable 4-deoxy-4-formamido-L-arabinose-phosphoundecaprenol deformylase ArnD of Shewanella sediminis (strain HAW-EB3).